Reading from the N-terminus, the 356-residue chain is Galactosylgalactosylxylosylprotein 3-beta-glucuronosyltransferase sqv-8 (356 aa).

At 1–9 (MFPSRLLEK) the chain is on the cytoplasmic side. A helical; Signal-anchor for type II membrane protein transmembrane segment spans residues 10–30 (WWLRAFIALVIFFVWQLFYAI). Residues 31-356 (NRVQSLEEER…LEAHALGVDN (326 aa)) are Lumenal-facing. 2 N-linked (GlcNAc...) asparagine glycosylation sites follow: asparagine 93 and asparagine 173. Residue aspartate 208 participates in Mn(2+) binding. N-linked (GlcNAc...) asparagine glycosylation is found at asparagine 246 and asparagine 272. Catalysis depends on glutamate 294, which acts as the Proton acceptor.

Belongs to the glycosyltransferase 43 family.

It localises to the membrane. It carries out the reaction 3-O-(beta-D-galactosyl-(1-&gt;3)-beta-D-galactosyl-(1-&gt;4)-beta-D-xylosyl)-L-seryl-[protein] + UDP-alpha-D-glucuronate = 3-O-(beta-D-GlcA-(1-&gt;3)-beta-D-Gal-(1-&gt;3)-beta-D-Gal-(1-&gt;4)-beta-D-Xyl)-L-seryl-[protein] + UDP + H(+). Functionally, glycosyltransferase required for the biosynthesis of the tetrasaccharide (GlcA-Gal-Gal-Xyl-)Ser core linker of heparan sulfate and chondroitin sulfate. May be involved in the biosynthesis of the HNK-1 carbohydrate epitope on glycoproteins. Required for embryonic development. Involved in the elongation of the pharyngeal isthmus during the later stages of embryonic development. Involved in vulval epithelium invagination. The sequence is that of Galactosylgalactosylxylosylprotein 3-beta-glucuronosyltransferase sqv-8 (sqv-8) from Caenorhabditis elegans.